A 366-amino-acid polypeptide reads, in one-letter code: Ferrochelatase (366 aa).

The Fe cation site is built by H210 and E293.

Belongs to the ferrochelatase family.

Its subcellular location is the cytoplasm. The enzyme catalyses heme b + 2 H(+) = protoporphyrin IX + Fe(2+). It participates in porphyrin-containing compound metabolism; protoheme biosynthesis; protoheme from protoporphyrin-IX: step 1/1. In terms of biological role, catalyzes the ferrous insertion into protoporphyrin IX. The protein is Ferrochelatase of Leptospira borgpetersenii serovar Hardjo-bovis (strain L550).